The chain runs to 314 residues: Methionyl-tRNA formyltransferase (314 aa).

Residue 112–115 (SLLP) coordinates (6S)-5,6,7,8-tetrahydrofolate.

The protein belongs to the Fmt family.

It catalyses the reaction L-methionyl-tRNA(fMet) + (6R)-10-formyltetrahydrofolate = N-formyl-L-methionyl-tRNA(fMet) + (6S)-5,6,7,8-tetrahydrofolate + H(+). Functionally, attaches a formyl group to the free amino group of methionyl-tRNA(fMet). The formyl group appears to play a dual role in the initiator identity of N-formylmethionyl-tRNA by promoting its recognition by IF2 and preventing the misappropriation of this tRNA by the elongation apparatus. The chain is Methionyl-tRNA formyltransferase from Legionella pneumophila (strain Paris).